The chain runs to 121 residues: MIQVESRLTVCDNSGAKEALCIRVLGGTGRRYASVGDVIVVSVKSVIPSSDVKKGAVSKALIVRTKKEIRRPDGSYIRFDDNACVLLNNAGEIRGSRIFGPVARELRATNMKVVSLAPEVL.

Belongs to the universal ribosomal protein uL14 family. In terms of assembly, part of the 50S ribosomal subunit. Forms a cluster with proteins L3 and L19. In the 70S ribosome, L14 and L19 interact and together make contacts with the 16S rRNA in bridges B5 and B8.

Functionally, binds to 23S rRNA. Forms part of two intersubunit bridges in the 70S ribosome. This chain is Large ribosomal subunit protein uL14, found in Bacteroides fragilis (strain ATCC 25285 / DSM 2151 / CCUG 4856 / JCM 11019 / LMG 10263 / NCTC 9343 / Onslow / VPI 2553 / EN-2).